The following is a 778-amino-acid chain: High affinity nerve growth factor receptor (778 aa).

The signal sequence occupies residues 1-14 (WGCLRLPLPLCHAL). Residues 15 to 400 (AAHCRCPASH…VETADEHTFG (386 aa)) lie on the Extracellular side of the membrane. Cysteines 18 and 20 form a disulfide. LRR repeat units follow at residues 71–92 (DLRHLTISNSGLQYISDDAFQD) and 95–116 (RLSHVNLSFNALTSLSWKTFQH). Asparagine 100, asparagine 130, asparagine 143, asparagine 151, asparagine 194, asparagine 234, asparagine 262, asparagine 300, asparagine 320, asparagine 340, and asparagine 384 each carry an N-linked (GlcNAc...) asparagine glycan. In terms of domain architecture, LRRCT spans 127 to 175 (NPFNCSCGIRWLQLWQNGSRAELGNQSLLCWEGSMLVALDSHPLHDCEP). A disulfide bridge links cysteine 133 with cysteine 173. Ig-like C2-type domains lie at 175–262 (PPTA…VMLN) and 281–347 (WCIP…VVQN). Cysteine 282 and cysteine 327 are disulfide-bonded. The helical transmembrane segment at 401 to 421 (VSVAVALAVFASLFLSVMLIA) threads the bilayer. At 422-778 (LNKCGHRSKF…TPPIYLDILG (357 aa)) the chain is on the cytoplasmic side. Tyrosine 479 is subject to Phosphotyrosine; by autocatalysis. Positions 493–763 (IVLKWELGEG…RSIQDIHSRL (271 aa)) constitute a Protein kinase domain. Residues 499 to 507 (LGEGAFGKV) and lysine 527 each bind ATP. The active-site Proton acceptor is aspartate 633. 4 positions are modified to phosphotyrosine; by autocatalysis: tyrosine 659, tyrosine 663, tyrosine 664, and tyrosine 773.

The protein belongs to the protein kinase superfamily. Tyr protein kinase family. Insulin receptor subfamily. Exists in a dynamic equilibrium between monomeric (low affinity) and dimeric (high affinity) structures. Homodimerization is induced by NGF dimer binding. Interacts with PTPRS. Post-translationally, ligand-mediated auto-phosphorylation. In terms of processing, ubiquitinated. Undergoes polyubiquitination upon activation; regulated by NGFR. Ubiquitination regulates the internalization of the receptor.

The protein localises to the cell membrane. Its subcellular location is the early endosome membrane. The protein resides in the late endosome membrane. It is found in the recycling endosome membrane. The enzyme catalyses L-tyrosyl-[protein] + ATP = O-phospho-L-tyrosyl-[protein] + ADP + H(+). The pro-survival signaling effect of NTRK1 in neurons requires its endocytosis into signaling early endosomes and its retrograde axonal transport. Functionally, receptor tyrosine kinase involved in the development and the maturation of the central and peripheral nervous systems through regulation of proliferation, differentiation and survival of sympathetic and nervous neurons. High affinity receptor for NGF which is its primary ligand, it can also bind and be activated by NTF3/neurotrophin-3. Upon dimeric NGF ligand-binding, undergoes homodimerization, autophosphorylation and activation. Recruits, phosphorylates and/or activates several downstream effectors that regulate distinct overlapping signaling cascades driving cell survival and differentiation. In absence of ligand and activation, may promote cell death, making the survival of neurons dependent on trophic factors. The chain is High affinity nerve growth factor receptor (NTRK1) from Gallus gallus (Chicken).